A 134-amino-acid chain; its full sequence is (R)-specific enoyl-CoA hydratase (134 aa).

The MaoC-like domain occupies 5–119; sequence SLEVGQKARL…ATLTTRIFTQ (115 aa). Residues 32–37, G55, and F84 each bind a (3R)-3-hydroxyacyl-CoA; that span reads DFNPLH.

In terms of assembly, homodimer.

It carries out the reaction a (3R)-3-hydroxyacyl-CoA = a (2E)-enoyl-CoA + H2O. Catalyzes the hydration of trans-2-enoyl-CoA with a chain-length of 4-6 carbon atoms, forming the corresponding (3R)-3-hydroxyacyl-CoA. This is (R)-specific enoyl-CoA hydratase (phaJ) from Aeromonas caviae (Aeromonas punctata).